We begin with the raw amino-acid sequence, 509 residues long: Protein Jade-1 (509 aa).

The segment at 1–45 (MKRGRLPSSSEDSDDNGSLSTTWSQNSRSQHRRSSCSRPEDRKPS) is disordered. Positions 60-80 (DSYQLNPDEYYVLADPWRQEW) are interaction with KAT7/HBO1 and histones. Residues 80–188 (WEKGVQVPVS…EQRCYDNMNH (109 aa)) form an interaction with histones region. Serine 89 bears the Phosphoserine mark. Threonine 92 is subject to Phosphothreonine. Lysine 114 is covalently cross-linked (Glycyl lysine isopeptide (Lys-Gly) (interchain with G-Cter in SUMO2)). The PHD-type 1 zinc finger occupies 203 to 253 (YVVCDVCQSPDGEDGNEMVFCDKCNICVHQACYGILKVPEGSWLCRTCALG). A C2HC pre-PHD-type zinc finger spans residues 255-289 (QPKCLLCPKKGGAMKPTRSGTKWVHVSCALWIPEV). Residues 313–369 (LVCSLCNEKFGASIQCSVKNCRTAFHVTCAFDRGLEMKTILAENDEVKFKSYCPKHS) form a PHD-type 2 zinc finger. The segment at 373 to 399 (KAEEGLGEGTAQENGAPECSPRDPLEP) is disordered.

Belongs to the JADE family. In terms of assembly, component of the HBO1 complex composed at least of ING4 or ING5, KAT7/HBO1, MEAF6, and one of JADE1, JADE2 and JADE3. Interacts with NPHP4.

It localises to the nucleus. It is found in the chromosome. Its subcellular location is the cytoplasm. The protein localises to the cytoskeleton. The protein resides in the cilium basal body. Functionally, scaffold subunit of some HBO1 complexes, which have a histone H4 acetyltransferase activity. Plays a key role in HBO1 complex by directing KAT7/HBO1 specificity towards histone H4 acetylation (H4K5ac, H4K8ac and H4K12ac), regulating DNA replication initiation, regulating DNA replication initiation. May also promote acetylation of nucleosomal histone H4 by KAT5. Promotes apoptosis. May act as a renal tumor suppressor. Negatively regulates canonical Wnt signaling; at least in part, cooperates with NPHP4 in this function. The chain is Protein Jade-1 (JADE1) from Bos taurus (Bovine).